The sequence spans 350 residues: Solute carrier family 35 member E4 (350 aa).

The next 8 membrane-spanning stretches (helical) occupy residues 40–60 (VLGQ…LLAG), 79–99 (PLLL…WGAQ), 110–130 (VLLL…GLST), 135–155 (LAQL…ALLL), 218–238 (VTLL…AALV), 258–278 (VLLS…LLAL), 279–299 (TSAL…LILS), and 301–321 (LLFG…TLSG). The 55-residue stretch at 125 to 179 (NVGLSTVPLDLAQLATTTTPLFTLALSALLLGRRHHPLQFAAMGPLCLGAACSLA) folds into the EamA domain.

It belongs to the TPT transporter family. SLC35E subfamily.

It localises to the membrane. Its function is as follows. Putative transporter. The polypeptide is Solute carrier family 35 member E4 (Slc35e4) (Rattus norvegicus (Rat)).